The sequence spans 536 residues: Cytochrome P450 78A7 (536 aa).

Residues 36–56 form a helical membrane-spanning segment; that stretch reads LFLAVVFLSIVTWALAGGGGV. Cys-481 provides a ligand contact to heme.

This sequence belongs to the cytochrome P450 family. Heme serves as cofactor.

It is found in the membrane. Functionally, functions probably in association with CYP78A5 in regulating relative growth of the shoot apical meristem and plant organs via a non-cell-autonomous signal. The protein is Cytochrome P450 78A7 (CYP78A7) of Arabidopsis thaliana (Mouse-ear cress).